Reading from the N-terminus, the 533-residue chain is Probable RNA-binding protein 46 (533 aa).

RRM domains are found at residues 61-139 (CEVF…VSLD), 141-223 (CRLF…WADP), and 236-308 (KVLY…LAKP). Residues 338–362 (ESHSKSLGKPPTLPTRLNGQHSPSP) form a disordered region.

Interacts with YTHDC2, MEIOC, MOV10, CNOT6L, DDX4, UPF1 and PABPC1. As to expression, expressed in the testis and ovary (at protein level). Expressed in spermatogonia and spermatocytes in testis (at protein level).

It is found in the cytoplasm. Functionally, essential for male and female fertility, playing a crucial role in regulating germ cell development by ensuring the proper progression of meiosis prophase I. Regulates mitotic-to-meiotic transition in spermatogenesis by forming a complex with MEIOC and YTHDC2 which recognizes and down-regulates mitotic transcripts for a successful meiotic entry. Required for normal synaptonemal complex formation during meiosis, binding meiotic cohesin subunit mRNAs containing GCCUAU/GUUCGA motifs in their 3'UTRs regions and positively regulating their translation. Required for spermatogonial differentiation in both developing and adult testis. The polypeptide is Probable RNA-binding protein 46 (Mus musculus (Mouse)).